The sequence spans 273 residues: 4-hydroxy-tetrahydrodipicolinate reductase (273 aa).

Residues 12–17 (GAGGRM) and Glu38 each bind NAD(+). NADP(+) is bound at residue Arg39. NAD(+) is bound by residues 102-104 (GTT) and 126-129 (AANF). His159 functions as the Proton donor/acceptor in the catalytic mechanism. His160 is a binding site for (S)-2,3,4,5-tetrahydrodipicolinate. Residue Lys163 is the Proton donor of the active site. Position 169 to 170 (169 to 170 (GT)) interacts with (S)-2,3,4,5-tetrahydrodipicolinate.

The protein belongs to the DapB family. Homotetramer.

The protein resides in the cytoplasm. It carries out the reaction (S)-2,3,4,5-tetrahydrodipicolinate + NAD(+) + H2O = (2S,4S)-4-hydroxy-2,3,4,5-tetrahydrodipicolinate + NADH + H(+). The enzyme catalyses (S)-2,3,4,5-tetrahydrodipicolinate + NADP(+) + H2O = (2S,4S)-4-hydroxy-2,3,4,5-tetrahydrodipicolinate + NADPH + H(+). The protein operates within amino-acid biosynthesis; L-lysine biosynthesis via DAP pathway; (S)-tetrahydrodipicolinate from L-aspartate: step 4/4. Functionally, catalyzes the conversion of 4-hydroxy-tetrahydrodipicolinate (HTPA) to tetrahydrodipicolinate. The protein is 4-hydroxy-tetrahydrodipicolinate reductase of Salmonella arizonae (strain ATCC BAA-731 / CDC346-86 / RSK2980).